The sequence spans 278 residues: Elongation factor Ts (278 aa).

The segment at 80–83 (TDFV) is involved in Mg(2+) ion dislocation from EF-Tu.

The protein belongs to the EF-Ts family.

Its subcellular location is the cytoplasm. In terms of biological role, associates with the EF-Tu.GDP complex and induces the exchange of GDP to GTP. It remains bound to the aminoacyl-tRNA.EF-Tu.GTP complex up to the GTP hydrolysis stage on the ribosome. The polypeptide is Elongation factor Ts (Pseudarthrobacter chlorophenolicus (strain ATCC 700700 / DSM 12829 / CIP 107037 / JCM 12360 / KCTC 9906 / NCIMB 13794 / A6) (Arthrobacter chlorophenolicus)).